Here is a 179-residue protein sequence, read N- to C-terminus: Ribosome maturation factor RimM (179 aa).

One can recognise a PRC barrel domain in the interval 100-176 (HGEYHLTELI…FILLTPPSGL (77 aa)).

Belongs to the RimM family. As to quaternary structure, binds ribosomal protein uS19.

It is found in the cytoplasm. An accessory protein needed during the final step in the assembly of 30S ribosomal subunit, possibly for assembly of the head region. Essential for efficient processing of 16S rRNA. May be needed both before and after RbfA during the maturation of 16S rRNA. It has affinity for free ribosomal 30S subunits but not for 70S ribosomes. The polypeptide is Ribosome maturation factor RimM (Prochlorococcus marinus subsp. pastoris (strain CCMP1986 / NIES-2087 / MED4)).